We begin with the raw amino-acid sequence, 48 residues long: uncharacterized protein (48 aa).

This is an uncharacterized protein from Acidianus filamentous virus 2 (isolate Italy/Pozzuoli) (AFV-2).